The sequence spans 564 residues: Phosphomethylpyrimidine synthase (564 aa).

Residues asparagine 203, methionine 232, tyrosine 261, histidine 297, 317 to 319, 358 to 361, and glutamate 397 each bind substrate; these read SRG and DGLR. Residue histidine 401 coordinates Zn(2+). Tyrosine 424 contributes to the substrate binding site. Position 465 (histidine 465) interacts with Zn(2+). 3 residues coordinate [4Fe-4S] cluster: cysteine 541, cysteine 544, and cysteine 549.

It belongs to the ThiC family. [4Fe-4S] cluster is required as a cofactor.

The enzyme catalyses 5-amino-1-(5-phospho-beta-D-ribosyl)imidazole + S-adenosyl-L-methionine = 4-amino-2-methyl-5-(phosphooxymethyl)pyrimidine + CO + 5'-deoxyadenosine + formate + L-methionine + 3 H(+). Its pathway is cofactor biosynthesis; thiamine diphosphate biosynthesis. Functionally, catalyzes the synthesis of the hydroxymethylpyrimidine phosphate (HMP-P) moiety of thiamine from aminoimidazole ribotide (AIR) in a radical S-adenosyl-L-methionine (SAM)-dependent reaction. The sequence is that of Phosphomethylpyrimidine synthase from Bacteroides fragilis (strain ATCC 25285 / DSM 2151 / CCUG 4856 / JCM 11019 / LMG 10263 / NCTC 9343 / Onslow / VPI 2553 / EN-2).